Here is a 371-residue protein sequence, read N- to C-terminus: Spermatogenic leucine zipper protein 1 (371 aa).

2 coiled-coil regions span residues E96 to D148 and F177 to E289. The residue at position 98 (S98) is a Phosphoserine. Residues I110–A120 form a helix-loop-helix motif region. Positions S121–R188 are basic motif. A Phosphoserine modification is found at S202. Residues K223–S240 are compositionally biased toward polar residues. The segment at K223–E246 is disordered. Residues L245 to L266 form a leucine-zipper region.

Phosphorylated by MAPK1/ERK2 and MAPK3/ERK1.

It localises to the cytoplasm. It is found in the nucleus. Functionally, transcription factor that binds to the DNA sequence 5'-CANNTG-3'(E box) and the G-box motif. May play an important role in the regulation of cell proliferation and differentiation during spermatogenesis. The chain is Spermatogenic leucine zipper protein 1 (SPZ1) from Bos taurus (Bovine).